A 356-amino-acid chain; its full sequence is D-alanine--D-alanine ligase (356 aa).

Positions 134-339 (KQLFAHRGLP…YSDLIKKLIE (206 aa)) constitute an ATP-grasp domain. 167–222 (HDKLEYPVFVKPANLGSSVGISKCNNEEELKNGIEEAFQFDRKLVIEQGIEAREIE) serves as a coordination point for ATP. Residues Asp293, Glu306, and Asn308 each coordinate Mg(2+).

It belongs to the D-alanine--D-alanine ligase family. The cofactor is Mg(2+). Requires Mn(2+) as cofactor.

The protein resides in the cytoplasm. The enzyme catalyses 2 D-alanine + ATP = D-alanyl-D-alanine + ADP + phosphate + H(+). Its pathway is cell wall biogenesis; peptidoglycan biosynthesis. Cell wall formation. In Staphylococcus saprophyticus subsp. saprophyticus (strain ATCC 15305 / DSM 20229 / NCIMB 8711 / NCTC 7292 / S-41), this protein is D-alanine--D-alanine ligase.